We begin with the raw amino-acid sequence, 504 residues long: MSLICSISNEVPEHPCVSPVSNHVYERRLIEKYIAENGTDPINNQPLSEEQLIDIKVAHPIRPKPPSATSIPAILKALQDEWDAVMLHSFTLRQQLQTTRQELSHALYQHDAACRVIARLTKEVTAAREALATLKPQAGLIVPQAVPSSQPSVVGAGEPMDLGELVGMTPEIIQKLQDKATVLTTERKKRGKTVPEELVKPEELSKYRQVASHVGLHSASIPGILALDLCPSDTNKILTGGADKNVVVFDKSTEQILATLKGHTKKVTSVVFHPSQELVFSASPDATIRIWSVPNTSCVQVVRAHESAVTGLSLHATGDYLLSSSDDQYWAFSDIQTGRVLTKVTDETSGCSLTCAQFHPDGLIFGTGTMDSQIKIWDLKERTNVANFPGHSGPITSIAFSENGYYLATAADDSSVKLWDLRKLKNFKTLQLDNNFEVKSLIFDQSGTYLALGGTDVQIYICKQWTEILHFTEHSGLTTGVAFGHHAKFIASTGMDRSLKFYSL.

Residue Ser-2 is modified to N-acetylserine. Residues 2 to 73 enclose the U-box domain; sequence SLICSISNEV…KPPSATSIPA (72 aa). Residues 68 to 223 are may mediate interaction with PSMC5; it reads ATSIPAILKA…VGLHSASIPG (156 aa). Residues Lys-122, Lys-179, Lys-244, and Lys-261 each carry the N6-acetyllysine modification. The WD 1 repeat unit spans residues 219–259; sequence ASIPGILALDLCPSDTNKILTGGADKNVVVFDKSTEQILAT. WD repeat units lie at residues 262-301, 304-345, 348-387, 390-429, 433-472, and 473-503; these read GHTK…CVQV, AHES…TKVT, TSGC…NVAN, GHSG…NFKT, DNNF…LHFT, and EHSG…KFYS.

It belongs to the WD repeat PRP19 family. As to quaternary structure, homotetramer. Component of activated, catalytic and post-catalytic spliceosomes. Component of the Prp19 complex/PRP19C/Nineteen complex/NTC and related complexes described as PRP19-CDC5L splicing complex and PSO4 complex. A homotetramer of PRPF19, CDC5L, PLRG1 and BCAS2 constitute the core of those complexes. The interaction with CDC5L, PLRG1 and BCAS2 is direct within this core complex. At least three less stably associated proteins CTNNBL1, CWC15 and HSPA8 are found in the Prp19 complex. The Prp19 complex associates with the spliceosome during its assembly and remodeling recruiting additional proteins. Component of the XAB2 complex, a multimeric protein complex composed of XAB2, PRPF19, AQR, ZNF830, ISY1, and PPIE. Interacts with CWC22 and EIF4A3 in an RNA-independent manner. Interacts with RPA1 and RPA2; the PRP19-CDC5L complex is recruited to the sites of DNA repair where it interacts with the replication protein A complex (RPA). Interacts with SETMAR; required for SETMAR recruitment to site of DNA damage. Interacts with U2AF2; the interaction is direct and recruits the Prp19 complex to RNA polymerase II C-terminal domain (CTD) and the pre-mRNA. Interacts with PRPF3. Interacts with APEX1, DNTT and PSMB4. Interacts with KNSTRN. Interacts with PSMC5. Isoform 2 (via N-terminus) interacts with PPIA. Isoform 2 does not interact with CDC5L. Interacts with KHDC4. Interacts with USB1. Interacts with DDX41. In terms of tissue distribution, expressed in white and brown adipose tissues, brain and to a lower extent in liver, kidney, muscle, lung and spleen (at protein level).

It is found in the nucleus. The protein resides in the nucleoplasm. Its subcellular location is the cytoplasm. The protein localises to the cytoskeleton. It localises to the spindle. It is found in the lipid droplet. It catalyses the reaction S-ubiquitinyl-[E2 ubiquitin-conjugating enzyme]-L-cysteine + [acceptor protein]-L-lysine = [E2 ubiquitin-conjugating enzyme]-L-cysteine + N(6)-ubiquitinyl-[acceptor protein]-L-lysine.. It participates in protein modification; protein ubiquitination. Functionally, ubiquitin-protein ligase which is a core component of several complexes mainly involved in pre-mRNA splicing and DNA repair. Required for pre-mRNA splicing as component of the spliceosome. Core component of the PRP19C/Prp19 complex/NTC/Nineteen complex which is part of the spliceosome and participates in its assembly, its remodeling and is required for its activity. During assembly of the spliceosome, mediates 'Lys-63'-linked polyubiquitination of the U4 spliceosomal protein PRPF3. Ubiquitination of PRPF3 allows its recognition by the U5 component PRPF8 and stabilizes the U4/U5/U6 tri-snRNP spliceosomal complex. Recruited to RNA polymerase II C-terminal domain (CTD) and the pre-mRNA, it may also couple the transcriptional and spliceosomal machineries. The XAB2 complex, which contains PRPF19, is also involved in pre-mRNA splicing, transcription and transcription-coupled repair. Beside its role in pre-mRNA splicing PRPF19, as part of the PRP19-CDC5L complex, plays a role in the DNA damage response/DDR. It is recruited to the sites of DNA damage by the RPA complex where PRPF19 directly ubiquitinates RPA1 and RPA2. 'Lys-63'-linked polyubiquitination of the RPA complex allows the recruitment of the ATR-ATRIP complex and the activation of ATR, a master regulator of the DNA damage response. May also play a role in DNA double-strand break (DSB) repair by recruiting the repair factor SETMAR to altered DNA. As part of the PSO4 complex may also be involved in the DNA interstrand cross-links/ICLs repair process. In addition, may also mediate 'Lys-48'-linked polyubiquitination of substrates and play a role in proteasomal degradation. May play a role in the biogenesis of lipid droplets. May play a role in neural differentiation possibly through its function as part of the spliceosome. Its function is as follows. Forced expression leads to suppression of neuronal differentiation, and on the contrary to stimulation of astroglial cell differentiation in retinoic acid-primed P19 cells. The chain is Pre-mRNA-processing factor 19 from Mus musculus (Mouse).